A 424-amino-acid polypeptide reads, in one-letter code: 3-ketoacyl-CoA thiolase, peroxisomal (424 aa).

A peroxisome-targeting transit peptide spans 1–26 (MQRLQVVLGHLRGPADSGWMPQAAPC). Positions 1-26 (MQRLQVVLGHLRGPADSGWMPQAAPC) are PTS2-type peroxisomal targeting signal. Phosphothreonine occurs at positions 59 and 60. Cys123 (acyl-thioester intermediate) is an active-site residue. Residues His377 and Cys408 each act as proton acceptor in the active site.

It belongs to the thiolase-like superfamily. Thiolase family. As to quaternary structure, homodimer. Interacts (via PTS2-type peroxisomal targeting signal region) with PEX7; leading to its translocation into peroxisomes.

Its subcellular location is the peroxisome. It carries out the reaction an acyl-CoA + acetyl-CoA = a 3-oxoacyl-CoA + CoA. The enzyme catalyses 2 acetyl-CoA = acetoacetyl-CoA + CoA. It catalyses the reaction tetradecanoyl-CoA + acetyl-CoA = 3-oxohexadecanoyl-CoA + CoA. The catalysed reaction is hexanoyl-CoA + acetyl-CoA = 3-oxooctanoyl-CoA + CoA. It carries out the reaction 3-oxohexadecanedioyl-CoA + CoA = tetradecanedioyl-CoA + acetyl-CoA. The enzyme catalyses 3-oxo-(6Z,9Z,12Z,15Z,18Z,21Z)-tetracosahexaenoyl-CoA + CoA = (4Z,7Z,10Z,13Z,16Z,19Z)-docosahexaenoyl-CoA + acetyl-CoA. It functions in the pathway lipid metabolism; peroxisomal fatty acid beta-oxidation. Its function is as follows. Responsible for the thiolytic cleavage of straight chain 3-keto fatty acyl-CoAs (3-oxoacyl-CoAs). Plays an important role in fatty acid peroxisomal beta-oxidation. Catalyzes the cleavage of short, medium, long, and very long straight chain 3-oxoacyl-CoAs. The protein is 3-ketoacyl-CoA thiolase, peroxisomal of Homo sapiens (Human).